Consider the following 127-residue polypeptide: Large ribosomal subunit protein uL24 (127 aa).

Belongs to the universal ribosomal protein uL24 family. As to quaternary structure, component of the large ribosomal subunit. Mature ribosomes consist of a small (40S) and a large (60S) subunit. The 40S subunit contains about 32 different proteins and 1 molecule of RNA (18S). The 60S subunit contains 45 different proteins and 3 molecules of RNA (25S, 5.8S and 5S).

The protein localises to the cytoplasm. Its function is as follows. Component of the ribosome, a large ribonucleoprotein complex responsible for the synthesis of proteins in the cell. The small ribosomal subunit (SSU) binds messenger RNAs (mRNAs) and translates the encoded message by selecting cognate aminoacyl-transfer RNA (tRNA) molecules. The large subunit (LSU) contains the ribosomal catalytic site termed the peptidyl transferase center (PTC), which catalyzes the formation of peptide bonds, thereby polymerizing the amino acids delivered by tRNAs into a polypeptide chain. The nascent polypeptides leave the ribosome through a tunnel in the LSU and interact with protein factors that function in enzymatic processing, targeting, and the membrane insertion of nascent chains at the exit of the ribosomal tunnel. This Candida albicans (strain SC5314 / ATCC MYA-2876) (Yeast) protein is Large ribosomal subunit protein uL24.